The chain runs to 163 residues: MITTGKVWKFGDDISTDEITPGRYNLTKDPKELAKIAFIEVRPDFARNVRPGDVVVAGKNFGIGSSRESAALALKALGIAGVIAESFGRIFYRNAINIGIPLLLGKTEGLKDGDLVTVNWETGEVRKGDEILMFEPLEDFLLEIVREGGILEYIRRRGDLCIR.

The protein belongs to the LeuD family. LeuD type 2 subfamily. Heterodimer of LeuC and LeuD.

The catalysed reaction is (2R,3S)-3-isopropylmalate = (2S)-2-isopropylmalate. The protein operates within amino-acid biosynthesis; L-leucine biosynthesis; L-leucine from 3-methyl-2-oxobutanoate: step 2/4. Catalyzes the isomerization between 2-isopropylmalate and 3-isopropylmalate, via the formation of 2-isopropylmaleate. This chain is 3-isopropylmalate dehydratase small subunit (leuD), found in Pyrococcus horikoshii (strain ATCC 700860 / DSM 12428 / JCM 9974 / NBRC 100139 / OT-3).